Here is a 979-residue protein sequence, read N- to C-terminus: Calsyntenin-1 (979 aa).

Residues 1-28 (MLRRPAPALAPAVRLLLAGLLCGGGVWA) form the signal peptide. At 29 to 859 (ARVNKHKPWL…PHPFAVVPST (831 aa)) the chain is on the extracellular side. 2 Cadherin domains span residues 38–164 (LEPT…APVF) and 165–265 (KEKS…SPGW). N-linked (GlcNAc...) asparagine glycosylation is found at Asn346, Asn366, and Asn515. The helical transmembrane segment at 860-880 (ATVVIVVCVSFLVFMIILGVF) threads the bilayer. Topologically, residues 881–979 (RIRAAHQRTM…LEWDDSTLSY (99 aa)) are cytoplasmic. The disordered stretch occupies residues 915 to 979 (METYEDQHSS…LEWDDSTLSY (65 aa)). The span at 925 to 959 (EEEEEEEEEEESEDGEEEEDITSAESESSEEEEGG) shows a compositional bias: acidic residues.

Belongs to the calsyntenin family. Directly interacts with APBA2. Forms a tripartite complex with APBA2 and APP. The CTF1 chain interacts with PSEN1. Interacts with KLC1 and APBB1. In terms of assembly, interacts with APBB1; this interaction stabilizes AlcICD metabolism. As to quaternary structure, interacts with PSEN1. In terms of processing, proteolytically processed under normal cellular conditions. A primary zeta-cleavage generates a large extracellular (soluble) N-terminal domain (sAlc) and a short C-terminal transmembrane fragment (CTF1). A secondary cleavage catalyzed by presenilin gamma-secretase within the transmembrane domain releases the beta-Alc-alpha chain in the extracellular milieu and produces an intracellular fragment (AlcICD). Beta-Alc-alpha secretion is largely dependent upon PSEN1 and PSEN2. This processing is strongly suppressed in the tripartite complex formed with APBA2 and APP, which seems to prevent the association with PSEN1. In terms of tissue distribution, highly expressed in the brain (at protein level), with over 90% of the neurons expressing detectable amounts. In the brain, relatively high levels in the cerebral cortex, striatum, hippocampus and thalamus. Moderate levels in the cerebellum. Low levels in the olfactory bulb, midbrain and pons (at protein level). Not detected in Purkinje cells. Expressed at low levels in the lung (at protein level). At the mRNA level, weakly detected in the kidney, lung, skeletal muscle, heart and testis. Not expressed in the sciatic nerve fiber.

Its subcellular location is the postsynaptic cell membrane. It is found in the endoplasmic reticulum membrane. The protein localises to the golgi apparatus membrane. The protein resides in the cell projection. It localises to the neuron projection. Its subcellular location is the vesicle. It is found in the nucleus. In terms of biological role, postsynaptic adhesion molecule that binds to presynaptic neurexins to mediate both excitatory and inhibitory synapse formation. Promotes synapse development by acting as a cell adhesion molecule at the postsynaptic membrane, which associates with neurexin-alpha at the presynaptic membrane. Also functions as a cargo in axonal anterograde transport by acting as a molecular adapter that promotes KLC1 association with vesicles. Complex formation with APBA2 and APP, stabilizes APP metabolism and enhances APBA2-mediated suppression of beta-APP40 secretion, due to the retardation of intracellular APP maturation. Its function is as follows. As intracellular fragment AlcICD, suppresses APBB1-dependent transactivation stimulated by APP C-terminal intracellular fragment (AICD), most probably by competing with AICD for APBB1-binding. In complex with APBA2 and C99, a C-terminal APP fragment, abolishes C99 interaction with PSEN1 and thus APP C99 cleavage by gamma-secretase, most probably through stabilization of the direct interaction between APBA2 and APP. The protein is Calsyntenin-1 of Mus musculus (Mouse).